Consider the following 76-residue polypeptide: EMBRYO SURROUNDING FACTOR 1-like protein 8 (76 aa).

The N-terminal stretch at 1–22 is a signal peptide; sequence MSSSQFFILCIILISSFPLHEC. Intrachain disulfides connect C38–C54, C43–C74, C52–C70, and C55–C63.

It belongs to the MEG family. In terms of tissue distribution, expressed in flowers.

The chain is EMBRYO SURROUNDING FACTOR 1-like protein 8 (ESFL8) from Arabidopsis thaliana (Mouse-ear cress).